The sequence spans 93 residues: MDGIKYAVFTDKSIRLLGKNQYTFNVESGSTRTEIKHWVELFFGVKVIAMNSHRLPGKGRRMGPIMGHTMHYRRMIITLQPGYSIPPLRKKRT.

This sequence belongs to the universal ribosomal protein uL23 family. Part of the 50S ribosomal subunit.

The protein resides in the plastid. Its subcellular location is the chloroplast. Its function is as follows. Binds to 23S rRNA. This is Large ribosomal subunit protein uL23cz/uL23cy (rpl23-A) from Coffea arabica (Arabian coffee).